The chain runs to 199 residues: OPA3-like protein (199 aa).

Residues 98 to 141 adopt a coiled-coil conformation; the sequence is RSSEKDKKKEEALQNRFKNLEEKLEVQQETINNLTNVIEAIQSS.

The protein belongs to the OPA3 family.

The polypeptide is OPA3-like protein (Dictyostelium discoideum (Social amoeba)).